The following is a 318-amino-acid chain: Ribonuclease Z (318 aa).

Zn(2+) is bound by residues His62, His64, Asp66, His67, His144, Asp215, and His273. Catalysis depends on Asp66, which acts as the Proton acceptor.

The protein belongs to the RNase Z family. Homodimer. It depends on Zn(2+) as a cofactor.

The catalysed reaction is Endonucleolytic cleavage of RNA, removing extra 3' nucleotides from tRNA precursor, generating 3' termini of tRNAs. A 3'-hydroxy group is left at the tRNA terminus and a 5'-phosphoryl group is left at the trailer molecule.. Its function is as follows. Zinc phosphodiesterase, which displays some tRNA 3'-processing endonuclease activity. Probably involved in tRNA maturation, by removing a 3'-trailer from precursor tRNA. The chain is Ribonuclease Z from Prochlorococcus marinus (strain MIT 9303).